The primary structure comprises 244 residues: MSQLDLNALNELPKVDRVLALAETNAQLETLTAEERVVWALENLPGEYVLSSSFGIQAAVSLHLVNQIRPDIPVILTDTGYLFPETYQFIDELTDKLKLNLKVYRAGESPAWQEARYGKLWEQGVEGIEKYNDINKVEPMNRALKELNAQTWFAGLRREQSGSRAHLPVLAIQRGVFKVLPIIDWDNRTVYQYLQKHGLKYHPLWDQGYLSVGDTHTTRKWEPGMAEEETRFFGLKRECGLHEG.

The active-site Nucleophile; cysteine thiosulfonate intermediate is the C239.

The protein belongs to the PAPS reductase family. CysH subfamily.

The protein resides in the cytoplasm. It carries out the reaction [thioredoxin]-disulfide + sulfite + adenosine 3',5'-bisphosphate + 2 H(+) = [thioredoxin]-dithiol + 3'-phosphoadenylyl sulfate. It functions in the pathway sulfur metabolism; hydrogen sulfide biosynthesis; sulfite from sulfate: step 3/3. Its function is as follows. Catalyzes the formation of sulfite from phosphoadenosine 5'-phosphosulfate (PAPS) using thioredoxin as an electron donor. The polypeptide is Phosphoadenosine 5'-phosphosulfate reductase (Salmonella schwarzengrund (strain CVM19633)).